We begin with the raw amino-acid sequence, 68 residues long: ATP synthase F(0) complex subunit 8 (68 aa).

Residues 8–24 (VWPTTITPMLLTLFLIT) traverse the membrane as a helical segment. Residue Lys54 is modified to N6-acetyllysine; alternate. Residue Lys54 is modified to N6-succinyllysine; alternate. An N6-acetyllysine modification is found at Lys57.

It belongs to the ATPase protein 8 family. In terms of assembly, component of the ATP synthase complex composed at least of ATP5F1A/subunit alpha, ATP5F1B/subunit beta, ATP5MC1/subunit c (homooctomer), MT-ATP6/subunit a, MT-ATP8/subunit 8, ATP5ME/subunit e, ATP5MF/subunit f, ATP5MG/subunit g, ATP5MK/subunit k, ATP5MJ/subunit j, ATP5F1C/subunit gamma, ATP5F1D/subunit delta, ATP5F1E/subunit epsilon, ATP5PF/subunit F6, ATP5PB/subunit b, ATP5PD/subunit d, ATP5PO/subunit OSCP. ATP synthase complex consists of a soluble F(1) head domain (subunits alpha(3) and beta(3)) - the catalytic core - and a membrane F(0) domain - the membrane proton channel (subunits c, a, 8, e, f, g, k and j). These two domains are linked by a central stalk (subunits gamma, delta, and epsilon) rotating inside the F1 region and a stationary peripheral stalk (subunits F6, b, d, and OSCP). Interacts with PRICKLE3.

The protein resides in the mitochondrion membrane. Subunit 8, of the mitochondrial membrane ATP synthase complex (F(1)F(0) ATP synthase or Complex V) that produces ATP from ADP in the presence of a proton gradient across the membrane which is generated by electron transport complexes of the respiratory chain. ATP synthase complex consist of a soluble F(1) head domain - the catalytic core - and a membrane F(1) domain - the membrane proton channel. These two domains are linked by a central stalk rotating inside the F(1) region and a stationary peripheral stalk. During catalysis, ATP synthesis in the catalytic domain of F(1) is coupled via a rotary mechanism of the central stalk subunits to proton translocation. In vivo, can only synthesize ATP although its ATP hydrolase activity can be activated artificially in vitro. Part of the complex F(0) domain. In Pan paniscus (Pygmy chimpanzee), this protein is ATP synthase F(0) complex subunit 8.